A 339-amino-acid polypeptide reads, in one-letter code: MAVVLDLLNKDTRPKLDAPARPRHPEKAHRPDTAIQRKPDWIRVKAPGSKLWAETKDIVRANNLVTVCEEAGCPNIGECWEKRHATFMIMGDTCTRACSFCNVRTGLPAALDEAEPEKVAEAVAKLGLHHVVVTSVDRDDLKDGGAEHFSRTIVAIRRASPGTTVEILTPDFLRKPGALEVVVAAKPDVFNHNMETVPGKYVTVRPGARYFHSVRLLQRVKELDPTIFTKSGIMVGLGEERNEVVQLMDDLRSAEVDFLTIGQYLQPTRKHHEVVRFVPPDEFKAYETTAYAKGFLLVSATPLTRSSHHAGEDFARLKAARLAKLGPAPVAASIRAVNA.

A disordered region spans residues 13 to 35 (RPKLDAPARPRHPEKAHRPDTAI). Positions 68, 73, 79, 94, 98, 101, and 307 each coordinate [4Fe-4S] cluster. One can recognise a Radical SAM core domain in the interval 80 to 296 (WEKRHATFMI…ETTAYAKGFL (217 aa)).

This sequence belongs to the radical SAM superfamily. Lipoyl synthase family. Requires [4Fe-4S] cluster as cofactor.

Its subcellular location is the cytoplasm. The catalysed reaction is [[Fe-S] cluster scaffold protein carrying a second [4Fe-4S](2+) cluster] + N(6)-octanoyl-L-lysyl-[protein] + 2 oxidized [2Fe-2S]-[ferredoxin] + 2 S-adenosyl-L-methionine + 4 H(+) = [[Fe-S] cluster scaffold protein] + N(6)-[(R)-dihydrolipoyl]-L-lysyl-[protein] + 4 Fe(3+) + 2 hydrogen sulfide + 2 5'-deoxyadenosine + 2 L-methionine + 2 reduced [2Fe-2S]-[ferredoxin]. It functions in the pathway protein modification; protein lipoylation via endogenous pathway; protein N(6)-(lipoyl)lysine from octanoyl-[acyl-carrier-protein]: step 2/2. In terms of biological role, catalyzes the radical-mediated insertion of two sulfur atoms into the C-6 and C-8 positions of the octanoyl moiety bound to the lipoyl domains of lipoate-dependent enzymes, thereby converting the octanoylated domains into lipoylated derivatives. The protein is Lipoyl synthase of Methylorubrum extorquens (strain PA1) (Methylobacterium extorquens).